The primary structure comprises 179 residues: MAKLHDYYKSDVVNELAKQFGYKTIMQVPRIEKITLNMGVGEAISDKKLLENAAADMAAISGQKPLITKARKSVAGFKIREGYPIGCKVTLRGERMWEFLERLICISVPRIRDFRGLNAKAFDGRGNYSMGVREQIIFPEIDYDKVDRVRGLDITITTSANTDEEGRALLAAFNFPFRK.

This sequence belongs to the universal ribosomal protein uL5 family. Part of the 50S ribosomal subunit; part of the 5S rRNA/L5/L18/L25 subcomplex. Contacts the 5S rRNA and the P site tRNA. Forms a bridge to the 30S subunit in the 70S ribosome.

This is one of the proteins that bind and probably mediate the attachment of the 5S RNA into the large ribosomal subunit, where it forms part of the central protuberance. In the 70S ribosome it contacts protein S13 of the 30S subunit (bridge B1b), connecting the 2 subunits; this bridge is implicated in subunit movement. Contacts the P site tRNA; the 5S rRNA and some of its associated proteins might help stabilize positioning of ribosome-bound tRNAs. The protein is Large ribosomal subunit protein uL5 of Aeromonas salmonicida (strain A449).